The primary structure comprises 288 residues: Glucose-1-phosphate thymidylyltransferase (288 aa).

Residues aspartate 108 and aspartate 223 each coordinate Mg(2+).

This sequence belongs to the glucose-1-phosphate thymidylyltransferase family. In terms of assembly, homotetramer. The cofactor is Mg(2+).

It catalyses the reaction dTTP + alpha-D-glucose 1-phosphate + H(+) = dTDP-alpha-D-glucose + diphosphate. Catalyzes the formation of dTDP-glucose, from dTTP and glucose 1-phosphate, as well as its pyrophosphorolysis. The sequence is that of Glucose-1-phosphate thymidylyltransferase (rmlA) from Neisseria gonorrhoeae.